Reading from the N-terminus, the 355-residue chain is MRTWKMRKDGQRIDYLGRKWRNLGGPFMEVSRVVTWIIIITLVALAIKTILPFFSPLFFAFITAYALYPLHIKLKERIGSKNSAILLTLFLLLGALMILLILVYTLTPVIGQAYDYLTNLEKIKINIPLVPKSVISSLEGVIDEFIERGKGYLVSLTFSVPKYLLQVIVYLTFVYFFLVKEKEARELITFEDEKLIRIIERGNLTLQALIRVWLLLNIVKGILMTLGFLIFKVSNLPTAILAGLLTVLFSFIPLFEGWMIWLAGAFYLVKQGHIIAGIGLAVYGFTLVSPLPDFTIRPKLVAREAEFNDVLVLIGMIGGTWGLGLKGLIIGPIVLNVAIEMLREWKNVQAKTERS.

Transmembrane regions (helical) follow at residues 34-54 (VTWIIIITLVALAIKTILPFF), 55-75 (SPLFFAFITAYALYPLHIKLK), 84-104 (AILLTLFLLLGALMILLILVY), 158-178 (FSVPKYLLQVIVYLTFVYFFL), 212-232 (VWLLLNIVKGILMTLGFLIFK), 240-260 (ILAGLLTVLFSFIPLFEGWMI), 274-294 (IIAGIGLAVYGFTLVSPLPDF), and 310-330 (VLVLIGMIGGTWGLGLKGLII).

It belongs to the autoinducer-2 exporter (AI-2E) (TC 2.A.86) family.

It localises to the cell membrane. In Pyrococcus horikoshii (strain ATCC 700860 / DSM 12428 / JCM 9974 / NBRC 100139 / OT-3), this protein is Putative transport protein PH1000.